Consider the following 946-residue polypeptide: DNA primase (946 aa).

Residues 596–626 (RDTEEDEDGKENKNNVPDNGVFQKTTSSVDT) are disordered. Over residues 617-626 (FQKTTSSVDT) the composition is skewed to polar residues. The CHC2-type zinc finger occupies 881 to 920 (CLNYTHRNPQETVQVFIDLRTEHSYALWASLWSRCFTKKC).

It belongs to the herpesviridae DNA primase family. As to quaternary structure, associates with the helicase and the primase-associated factor to form the helicase-primase factor. Interacts with host SNAPIN.

The protein resides in the host nucleus. Essential component of the helicase/primase complex. Unwinds the DNA at the replication forks and generates single-stranded DNA for both leading and lagging strand synthesis. The primase initiates primer synthesis and thereby produces large amount of short RNA primers on the lagging strand that the polymerase elongates using dNTPs. In Homo sapiens (Human), this protein is DNA primase (UL70).